The primary structure comprises 314 residues: 3'-5' exoribonuclease YhaM (314 aa).

Positions 22-90 (SSTKGIASNG…QLKLRNIRPV (69 aa)) form a DNA-binding region, OB. The region spanning 163 to 279 (HVVSMLNLAK…LHYIDNLDAK (117 aa)) is the HD domain.

The protein belongs to the YhaM family. Requires Mn(2+) as cofactor. The cofactor is Co(2+).

Functionally, shows a 3'-5' exoribonuclease activity as well as single-stranded DNA 3'-5'exonuclease activity. Plays a role in the secondary pathway of 23S rRNA 3' end maturation. The chain is 3'-5' exoribonuclease YhaM from Bacillus subtilis (strain 168).